The chain runs to 272 residues: Phosphonates import ATP-binding protein PhnC (272 aa).

In terms of domain architecture, ABC transporter spans Leu-2–Asp-246. Gly-35 to Ser-42 contributes to the ATP binding site. The interval Ala-248–Arg-272 is disordered. A compositionally biased stretch (basic and acidic residues) spans Pro-254 to Arg-272.

Belongs to the ABC transporter superfamily. Phosphonates importer (TC 3.A.1.9.1) family. The complex is composed of two ATP-binding proteins (PhnC), two transmembrane proteins (PhnE) and a solute-binding protein (PhnD).

The protein resides in the cell inner membrane. The catalysed reaction is phosphonate(out) + ATP + H2O = phosphonate(in) + ADP + phosphate + H(+). Functionally, part of the ABC transporter complex PhnCDE involved in phosphonates import. Responsible for energy coupling to the transport system. This is Phosphonates import ATP-binding protein PhnC from Chromohalobacter salexigens (strain ATCC BAA-138 / DSM 3043 / CIP 106854 / NCIMB 13768 / 1H11).